The primary structure comprises 270 residues: Probable inner membrane protein BTH_II0599 (270 aa).

The next 6 membrane-spanning stretches (helical) occupy residues 24–44 (RNPLAFVTLFFTYLLAMMLVS), 45–65 (LVPVIGAALPLLLIPGIAVGF), 98–118 (LLTLGGLYIVSMAAVFACSAL), 150–170 (ALIAAALYAPVAMMFWFAPVL), 198–218 (VYGLLWFALALGVSFGLAALM), and 226–246 (YALMVMMPASIVITAMLYCSF).

It localises to the cell inner membrane. In terms of biological role, (Microbial infection) Probably transports the toxic C-terminal region of CdiA-2 from B.pseudomallei strain 1026b across the inner membrane to the cytoplasm, where CdiA has a toxic effect. Expression in E.coli makes the bacteria sensitive to the tRNase domain of B.pseudomallei strain 1026b CdiA-2. The chain is Probable inner membrane protein BTH_II0599 from Burkholderia thailandensis (strain ATCC 700388 / DSM 13276 / CCUG 48851 / CIP 106301 / E264).